A 478-amino-acid polypeptide reads, in one-letter code: PRAME family member 4 (478 aa).

The LRR 1; degenerate repeat unit spans residues 99 to 126 (RWKLQVLDLQDVCENFWMVWSEAMAHGC). One copy of the LRR 2; degenerate repeat lies at 181-205 (HLCCKKLKILGMPFRNIRSILKMVN). The stretch at 206–232 (LDCIQEVEVNCKWVLPILTQFTPYLGH) is one LRR 3; degenerate repeat. An LRR 4; degenerate repeat occupies 233-268 (MRNLQKLILSHMDVSRYVSPEQKKEIVTQFTTQFLK). LRR repeat units lie at residues 269 to 294 (LRCLQKLYMNSVSFLEGHLDQLLSCL), 295 to 326 (KTSLKFLTITNCVLLESDLKHLSQCPSISQLK), 327 to 347 (TLDLSGIRLTNYSLVPLQILL), 351 to 378 (AATLEYLDLDDCGIIDSQVNAILPALSR), and 379 to 403 (CFELNTFSFCGNPICMATLENLLSH).

This sequence belongs to the PRAME family.

This chain is PRAME family member 4, found in Homo sapiens (Human).